Consider the following 338-residue polypeptide: DPKIGGVMIMGDRGTGKSTTIRALADLLPEIPVVANDPFNSDPSDPDLMSDEVRQKSGTGAEIPIEFKKVQMVDLPLGATEDRVCGTIDIEKALSEGVKAFEPGLLAKANRGILYVDEVNLLDDHLVDVLLDSAASGWNTVEREGISIRHPARFVLVGSGNPEEGELRPQLLDRFGMHAEIHTVKEPALRVQIVEQRSEFDQNPPTFLEKYNPEQTALQKKIVEAQKLLPEVKLDYDLRVKISEVCSELDVDGLRGDIVTNRAAKALTAYEGRTEVTVDDIRRVITLCLRHRLRKDPLESIDSGYKVEKVFARIFGVELLEDDSSQKNGAGQIKTGVR.

Gly-11 to Ser-18 is a binding site for ATP.

The protein belongs to the Mg-chelatase subunits D/I family.

The catalysed reaction is protoporphyrin IX + Mg(2+) + ATP + H2O = Mg-protoporphyrin IX + ADP + phosphate + 3 H(+). It participates in porphyrin-containing compound metabolism; chlorophyll biosynthesis. In terms of biological role, involved in chlorophyll biosynthesis; introduces a magnesium ion into protoporphyrin IX to yield Mg-protoporphyrin IX. In Anabaena variabilis, this protein is Magnesium-chelatase subunit ChlI (chlI).